The primary structure comprises 461 residues: UDP-N-acetylmuramate--L-alanine ligase (461 aa).

112–118 (GTHGKTT) lines the ATP pocket.

This sequence belongs to the MurCDEF family.

The protein localises to the cytoplasm. It catalyses the reaction UDP-N-acetyl-alpha-D-muramate + L-alanine + ATP = UDP-N-acetyl-alpha-D-muramoyl-L-alanine + ADP + phosphate + H(+). It functions in the pathway cell wall biogenesis; peptidoglycan biosynthesis. Functionally, cell wall formation. The sequence is that of UDP-N-acetylmuramate--L-alanine ligase from Hydrogenovibrio crunogenus (strain DSM 25203 / XCL-2) (Thiomicrospira crunogena).